Consider the following 519-residue polypeptide: 3-octaprenyl-4-hydroxybenzoate carboxy-lyase (519 aa).

Asn177 contributes to the Mn(2+) binding site. Prenylated FMN-binding positions include 180 to 182 (IYR), 194 to 196 (RWL), and 199 to 200 (RG). Residue Glu243 participates in Mn(2+) binding. Asp318 (proton donor) is an active-site residue.

The protein belongs to the UbiD family. In terms of assembly, homohexamer. Requires prenylated FMN as cofactor. It depends on Mn(2+) as a cofactor.

The protein localises to the cell membrane. It catalyses the reaction a 4-hydroxy-3-(all-trans-polyprenyl)benzoate + H(+) = a 2-(all-trans-polyprenyl)phenol + CO2. It functions in the pathway cofactor biosynthesis; ubiquinone biosynthesis. Its function is as follows. Catalyzes the decarboxylation of 3-octaprenyl-4-hydroxy benzoate to 2-octaprenylphenol, an intermediate step in ubiquinone biosynthesis. This is 3-octaprenyl-4-hydroxybenzoate carboxy-lyase from Burkholderia pseudomallei (strain 1710b).